The primary structure comprises 126 residues: Small ribosomal subunit protein uS13 (126 aa).

Residues 95–126 are disordered; sequence GLPVRGQQTRTNARTRKGKRKTVGGTKKAKAK. Positions 107–126 are enriched in basic residues; it reads ARTRKGKRKTVGGTKKAKAK.

It belongs to the universal ribosomal protein uS13 family. As to quaternary structure, part of the 30S ribosomal subunit. Forms a loose heterodimer with protein S19. Forms two bridges to the 50S subunit in the 70S ribosome.

Its function is as follows. Located at the top of the head of the 30S subunit, it contacts several helices of the 16S rRNA. In the 70S ribosome it contacts the 23S rRNA (bridge B1a) and protein L5 of the 50S subunit (bridge B1b), connecting the 2 subunits; these bridges are implicated in subunit movement. Contacts the tRNAs in the A and P-sites. This chain is Small ribosomal subunit protein uS13, found in Aquifex aeolicus (strain VF5).